The following is a 446-amino-acid chain: tRNA modification GTPase MnmE (446 aa).

Arginine 24, glutamate 81, and lysine 120 together coordinate (6S)-5-formyl-5,6,7,8-tetrahydrofolate. Residues glycine 216–leucine 368 enclose the TrmE-type G domain. Asparagine 226 is a K(+) binding site. Residues asparagine 226–serine 231, threonine 245–threonine 251, and aspartate 270–glycine 273 each bind GTP. Serine 230 provides a ligand contact to Mg(2+). K(+) is bound by residues threonine 245, valine 247, and threonine 250. A Mg(2+)-binding site is contributed by threonine 251. Position 446 (lysine 446) interacts with (6S)-5-formyl-5,6,7,8-tetrahydrofolate.

The protein belongs to the TRAFAC class TrmE-Era-EngA-EngB-Septin-like GTPase superfamily. TrmE GTPase family. As to quaternary structure, homodimer. Heterotetramer of two MnmE and two MnmG subunits. Requires K(+) as cofactor.

It localises to the cytoplasm. Exhibits a very high intrinsic GTPase hydrolysis rate. Involved in the addition of a carboxymethylaminomethyl (cmnm) group at the wobble position (U34) of certain tRNAs, forming tRNA-cmnm(5)s(2)U34. The polypeptide is tRNA modification GTPase MnmE (Xanthomonas euvesicatoria pv. vesicatoria (strain 85-10) (Xanthomonas campestris pv. vesicatoria)).